We begin with the raw amino-acid sequence, 56 residues long: Large ribosomal subunit protein bL32 (56 aa).

Residues 1 to 37 are disordered; sequence MAVQQNKPTRSKRGMRRSHDALTAPLLSVDKTSGETH.

The protein belongs to the bacterial ribosomal protein bL32 family.

The protein is Large ribosomal subunit protein bL32 of Photorhabdus laumondii subsp. laumondii (strain DSM 15139 / CIP 105565 / TT01) (Photorhabdus luminescens subsp. laumondii).